Reading from the N-terminus, the 237-residue chain is (5-formylfuran-3-yl)methyl phosphate synthase (237 aa).

The active-site Schiff-base intermediate with substrate is Lys27. Catalysis depends on Lys85, which acts as the Proton acceptor.

This sequence belongs to the MfnB family.

It catalyses the reaction 2 D-glyceraldehyde 3-phosphate = 4-(hydroxymethyl)-2-furancarboxaldehyde phosphate + phosphate + 2 H2O. The protein operates within cofactor biosynthesis; methanofuran biosynthesis. In terms of biological role, catalyzes the formation of 4-(hydroxymethyl)-2-furancarboxaldehyde phosphate (4-HFC-P) from two molecules of glyceraldehyde-3-P (GA-3-P). This chain is (5-formylfuran-3-yl)methyl phosphate synthase, found in Methanobrevibacter smithii (strain ATCC 35061 / DSM 861 / OCM 144 / PS).